Reading from the N-terminus, the 480-residue chain is UDP-glycosyltransferase 71C5 (480 aa).

Residues Ser-290, 349 to 351, 366 to 374, and 388 to 391 contribute to the UDP-alpha-D-glucose site; these read APQ, HCGWNSVQE, and YAEQ.

It belongs to the UDP-glycosyltransferase family.

Functionally, possesses low quercetin 3-O-glucosyltransferase activity in vitro. This chain is UDP-glycosyltransferase 71C5 (UGT71C5), found in Arabidopsis thaliana (Mouse-ear cress).